A 403-amino-acid chain; its full sequence is Phosphoglycerate kinase (403 aa).

Substrate-binding positions include 21-23 (DFN), Arg-36, 59-62 (HLGR), Arg-118, and Arg-151. Residues Lys-202, Glu-328, and 354–357 (GGDS) each bind ATP.

This sequence belongs to the phosphoglycerate kinase family. As to quaternary structure, monomer.

Its subcellular location is the cytoplasm. It carries out the reaction (2R)-3-phosphoglycerate + ATP = (2R)-3-phospho-glyceroyl phosphate + ADP. Its pathway is carbohydrate degradation; glycolysis; pyruvate from D-glyceraldehyde 3-phosphate: step 2/5. The sequence is that of Phosphoglycerate kinase from Akkermansia muciniphila (strain ATCC BAA-835 / DSM 22959 / JCM 33894 / BCRC 81048 / CCUG 64013 / CIP 107961 / Muc).